The sequence spans 89 residues: Small ribosomal subunit protein uS15 (89 aa).

The protein belongs to the universal ribosomal protein uS15 family. Part of the 30S ribosomal subunit. Forms a bridge to the 50S subunit in the 70S ribosome, contacting the 23S rRNA.

In terms of biological role, one of the primary rRNA binding proteins, it binds directly to 16S rRNA where it helps nucleate assembly of the platform of the 30S subunit by binding and bridging several RNA helices of the 16S rRNA. Forms an intersubunit bridge (bridge B4) with the 23S rRNA of the 50S subunit in the ribosome. The protein is Small ribosomal subunit protein uS15 of Roseiflexus castenholzii (strain DSM 13941 / HLO8).